Here is a 641-residue protein sequence, read N- to C-terminus: Chaperone protein HtpG (641 aa).

Residues 1 to 351 (MTQSVHAETH…SNDLPLNVSR (351 aa)) form an a; substrate-binding region. The segment at 352–568 (EILQDNKVTV…AHGMSTQMIK (217 aa)) is b. Positions 569–641 (LMRAAGQPVP…SRINRLLLQA (73 aa)) are c.

The protein belongs to the heat shock protein 90 family. As to quaternary structure, homodimer.

The protein localises to the cytoplasm. Functionally, molecular chaperone. Has ATPase activity. This is Chaperone protein HtpG from Aeromonas hydrophila subsp. hydrophila (strain ATCC 7966 / DSM 30187 / BCRC 13018 / CCUG 14551 / JCM 1027 / KCTC 2358 / NCIMB 9240 / NCTC 8049).